The following is a 458-amino-acid chain: Monomethylamine methyltransferase MtmB3 (458 aa).

Position 202 (Pyl202) is a non-standard amino acid, pyrrolysine.

The protein belongs to the monomethylamine methyltransferase family.

It catalyses the reaction Co(I)-[methylamine-specific corrinoid protein] + methylamine + H(+) = methyl-Co(III)-[methylamine-specific corrinoid protein] + NH4(+). The protein operates within one-carbon metabolism; methanogenesis from methylamine. In terms of biological role, catalyzes the transfer of the methyl group from monomethylamine to the corrinoid cofactor of MtmC. The protein is Monomethylamine methyltransferase MtmB3 (mtmB3) of Methanosarcina barkeri (strain Fusaro / DSM 804).